The primary structure comprises 351 residues: Photosystem II D2 protein (351 aa).

A helical transmembrane segment spans residues 39 to 59; sequence TAYLAIGGWLTGTTFVTSWYT. His-116 is a chlorophyll a binding site. The chain crosses the membrane as a helical span at residues 123 to 139; it reads GFMLRQFEIARLVGIRP. Pheophytin a contacts are provided by Gln-128 and Asn-141. A helical membrane pass occupies residues 151 to 164; that stretch reads VFVSVFLMYPLGQS. His-196 provides a ligand contact to chlorophyll a. Residues 206–226 form a helical membrane-spanning segment; the sequence is GALLCAIHGATVENTLFEDGE. Residues His-213 and Phe-260 each coordinate a plastoquinone. His-213 serves as a coordination point for Fe cation. His-267 contacts Fe cation. Residues 277–293 traverse the membrane as a helical segment; the sequence is GLWTSSIGIIGLALNLR.

The protein belongs to the reaction center PufL/M/PsbA/D family. In terms of assembly, PSII is composed of 1 copy each of membrane proteins PsbA, PsbB, PsbC, PsbD, PsbE, PsbF, PsbH, PsbI, PsbJ, PsbK, PsbL, PsbM, PsbT, PsbX, PsbY, PsbZ, Psb30/Ycf12, peripheral proteins PsbO, CyanoQ (PsbQ), PsbU, PsbV and a large number of cofactors. It forms dimeric complexes. The D1/D2 heterodimer binds P680, chlorophylls that are the primary electron donor of PSII, and subsequent electron acceptors. It shares a non-heme iron and each subunit binds pheophytin, quinone, additional chlorophylls, carotenoids and lipids. There is also a Cl(-1) ion associated with D1 and D2, which is required for oxygen evolution. The PSII complex binds additional chlorophylls, carotenoids and specific lipids. serves as cofactor.

Its subcellular location is the cellular thylakoid membrane. The catalysed reaction is 2 a plastoquinone + 4 hnu + 2 H2O = 2 a plastoquinol + O2. In terms of biological role, photosystem II (PSII) is a light-driven water:plastoquinone oxidoreductase that uses light energy to abstract electrons from H(2)O, generating O(2) and a proton gradient subsequently used for ATP formation. It consists of a core antenna complex that captures photons, and an electron transfer chain that converts photonic excitation into a charge separation. The D1/D2 (PsbA/PsbD) reaction center heterodimer binds P680, the primary electron donor of PSII as well as several subsequent electron acceptors. D2 is needed for assembly of a stable PSII complex. The protein is Photosystem II D2 protein of Parasynechococcus marenigrum (strain WH8102).